A 197-amino-acid polypeptide reads, in one-letter code: Probable host range protein 2 (197 aa).

The segment at 172 to 197 is disordered; it reads DHDDNDNADDDEEDDDEVNDIEDDYE. The segment covering 174–197 has biased composition (acidic residues); it reads DDNDNADDDEEDDDEVNDIEDDYE.

It belongs to the poxviridae C7 protein family.

The chain is Probable host range protein 2 from Ovis aries (Sheep).